The chain runs to 89 residues: Small ribosomal subunit protein uS15 (89 aa).

The protein belongs to the universal ribosomal protein uS15 family. As to quaternary structure, part of the 30S ribosomal subunit. Forms a bridge to the 50S subunit in the 70S ribosome, contacting the 23S rRNA.

In terms of biological role, one of the primary rRNA binding proteins, it binds directly to 16S rRNA where it helps nucleate assembly of the platform of the 30S subunit by binding and bridging several RNA helices of the 16S rRNA. Forms an intersubunit bridge (bridge B4) with the 23S rRNA of the 50S subunit in the ribosome. This chain is Small ribosomal subunit protein uS15, found in Streptococcus equi subsp. zooepidemicus (strain H70).